Reading from the N-terminus, the 238-residue chain is Pyridoxine 5'-phosphate synthase (238 aa).

Asn-9 serves as a coordination point for 3-amino-2-oxopropyl phosphate. 11-12 provides a ligand contact to 1-deoxy-D-xylulose 5-phosphate; the sequence is DH. Residue Arg-20 participates in 3-amino-2-oxopropyl phosphate binding. The Proton acceptor role is filled by His-45. Positions 47 and 52 each coordinate 1-deoxy-D-xylulose 5-phosphate. The active-site Proton acceptor is Glu-72. Thr-102 is a 1-deoxy-D-xylulose 5-phosphate binding site. The active-site Proton donor is the His-189. Residues Gly-190 and 211 to 212 each bind 3-amino-2-oxopropyl phosphate; that span reads GH.

Belongs to the PNP synthase family. In terms of assembly, homooctamer; tetramer of dimers.

The protein resides in the cytoplasm. The catalysed reaction is 3-amino-2-oxopropyl phosphate + 1-deoxy-D-xylulose 5-phosphate = pyridoxine 5'-phosphate + phosphate + 2 H2O + H(+). Its pathway is cofactor biosynthesis; pyridoxine 5'-phosphate biosynthesis; pyridoxine 5'-phosphate from D-erythrose 4-phosphate: step 5/5. Its function is as follows. Catalyzes the complicated ring closure reaction between the two acyclic compounds 1-deoxy-D-xylulose-5-phosphate (DXP) and 3-amino-2-oxopropyl phosphate (1-amino-acetone-3-phosphate or AAP) to form pyridoxine 5'-phosphate (PNP) and inorganic phosphate. This Ehrlichia ruminantium (strain Welgevonden) protein is Pyridoxine 5'-phosphate synthase.